Reading from the N-terminus, the 866-residue chain is Interleukin-17 receptor A (866 aa).

Residues 1-32 (MGAARSPPSAVPGPLLGLLLLLLGVLAPGGAS) form the signal peptide. At 33 to 320 (LRLLDHRALV…EPIPDYMPLW (288 aa)) the chain is on the extracellular side. Cysteine 43 and cysteine 50 are disulfide-bonded. Residues asparagine 49, asparagine 54, and asparagine 67 are each glycosylated (N-linked (GlcNAc...) asparagine). Cystine bridges form between cysteine 57–cysteine 126 and cysteine 185–cysteine 196. 4 N-linked (GlcNAc...) asparagine glycosylation sites follow: asparagine 206, asparagine 225, asparagine 242, and asparagine 265. Intrachain disulfides connect cysteine 245–cysteine 276, cysteine 277–cysteine 303, and cysteine 290–cysteine 294. Residues 321-341 (VYWFITGISILLVGSVILLIV) form a helical membrane-spanning segment. At 342-866 (CMTWRLAGPG…MGSESEGPSA (525 aa)) the chain is on the cytoplasmic side. Residues 377–534 (PRKVWIIYSA…LMDRFEEVYF (158 aa)) enclose the SEFIR domain. Serine 708 and serine 736 each carry phosphoserine. Disordered regions lie at residues 717–736 (LFLPVDPEDSPLGSSTPMAS) and 773–840 (MVLT…RSLQ). Positions 788–801 (QSVQSDQGYISRSS) are enriched in polar residues. Residues 809-819 (TEMEEEEEEEQ) show a composition bias toward acidic residues.

Forms heterodimers with IL17RC; the heterodimer binds IL17A and IL17F homodimers as well as the heterodimer formed by IL17A and IL17F. Forms complexes with 2:1 binding stoichiometry: two receptor chains for one interleukin molecule. IL17A homodimer preferentially drives the formation of IL17RA-IL17RC heterodimeric receptor complex, whereas IL17F homodimer forms predominantly complexes with IL17RC homodimer. IL17A homodimer adopts an asymmetrical ternary structure with one IL17RA molecule, allowing for high affinity interactions of one IL17A monomer with one IL17RA molecule (via D1 and D2 domains), while disfavoring binding of a second IL17RA molecule on the other IL17A monomer. IL17A-IL17F forms complexes with IL17RA-IL17RC, but with lower affinity when compared to IL17A homodimer. IL17RA chain cannot distinguish between IL17A and IL17F molecules, potentially enabling the formation of topologically distinct complexes. Interacts with TRAF3IP2. Forms heterodimers with IL17RE; the heterodimer binds IL17C. In terms of assembly, (Microbial infection) Interacts with SARS coronavirus-2/SARS-CoV-2 virus protein ORF8. Glycosylated. In terms of tissue distribution, widely expressed.

It localises to the cell membrane. It is found in the secreted. Its function is as follows. Receptor for IL17A and IL17F, major effector cytokines of innate and adaptive immune system involved in antimicrobial host defense and maintenance of tissue integrity. Receptor for IL17A. Receptor for IL17F. Binds to IL17A with higher affinity than to IL17F. Binds IL17A and IL17F homodimers as part of a heterodimeric complex with IL17RC. Also binds heterodimers formed by IL17A and IL17F as part of a heterodimeric complex with IL17RC. Cytokine binding triggers homotypic interaction of IL17RA and IL17RC chains with TRAF3IP2 adapter, leading to TRAF6-mediated activation of NF-kappa-B and MAPkinase pathways, ultimately resulting in transcriptional activation of cytokines, chemokines, antimicrobial peptides and matrix metalloproteinases, with potential strong immune inflammation. Involved in antimicrobial host defense primarily promoting neutrophil activation and recruitment at infection sites to destroy extracellular bacteria and fungi. In secondary lymphoid organs, contributes to germinal center formation by regulating the chemotactic response of B cells to CXCL12 and CXCL13, enhancing retention of B cells within the germinal centers, B cell somatic hypermutation rate and selection toward plasma cells. Plays a role in the maintenance of the integrity of epithelial barriers during homeostasis and pathogen infection. Stimulates the production of antimicrobial beta-defensins DEFB1, DEFB103A, and DEFB104A by mucosal epithelial cells, limiting the entry of microbes through the epithelial barriers. Involved in antiviral host defense through various mechanisms. Enhances immunity against West Nile virus by promoting T cell cytotoxicity. Contributes to Influenza virus clearance by driving the differentiation of B-1a B cells, providing for production of virus-specific IgM antibodies at first line of host defense. Receptor for IL17C as part of a heterodimeric complex with IL17RE. (Microbial infection) Receptor for SARS coronavirus-2/SARS-CoV-2 virus protein ORF8, leading to IL17 pathway activation and an increased secretion of pro-inflammatory factors through activating NF-kappa-B signaling pathway. The chain is Interleukin-17 receptor A from Homo sapiens (Human).